We begin with the raw amino-acid sequence, 349 residues long: Beta-hexosaminidase (349 aa).

Substrate contacts are provided by residues Asp64, Arg72, Arg138, and 168 to 169 (KH). Catalysis depends on His181, which acts as the Proton donor/acceptor. Asp252 functions as the Nucleophile in the catalytic mechanism.

It belongs to the glycosyl hydrolase 3 family. NagZ subfamily.

It localises to the cytoplasm. The catalysed reaction is Hydrolysis of terminal non-reducing N-acetyl-D-hexosamine residues in N-acetyl-beta-D-hexosaminides.. The protein operates within cell wall biogenesis; peptidoglycan recycling. Its function is as follows. Plays a role in peptidoglycan recycling by cleaving the terminal beta-1,4-linked N-acetylglucosamine (GlcNAc) from peptide-linked peptidoglycan fragments, giving rise to free GlcNAc, anhydro-N-acetylmuramic acid and anhydro-N-acetylmuramic acid-linked peptides. The chain is Beta-hexosaminidase from Methylobacillus flagellatus (strain ATCC 51484 / DSM 6875 / VKM B-1610 / KT).